A 365-amino-acid chain; its full sequence is Peptide chain release factor 2 (365 aa).

An N5-methylglutamine modification is found at glutamine 252.

It belongs to the prokaryotic/mitochondrial release factor family. Methylated by PrmC. Methylation increases the termination efficiency of RF2.

It is found in the cytoplasm. Functionally, peptide chain release factor 2 directs the termination of translation in response to the peptide chain termination codons UGA and UAA. The protein is Peptide chain release factor 2 of Aeromonas salmonicida (strain A449).